The chain runs to 367 residues: tRNA/tmRNA (uracil-C(5))-methyltransferase (367 aa).

S-adenosyl-L-methionine contacts are provided by Gln189, Tyr217, Asn222, Glu238, and Asp298. Residue Cys323 is the Nucleophile of the active site. The active-site Proton acceptor is Glu357.

Belongs to the class I-like SAM-binding methyltransferase superfamily. RNA M5U methyltransferase family. TrmA subfamily.

It catalyses the reaction uridine(54) in tRNA + S-adenosyl-L-methionine = 5-methyluridine(54) in tRNA + S-adenosyl-L-homocysteine + H(+). The enzyme catalyses uridine(341) in tmRNA + S-adenosyl-L-methionine = 5-methyluridine(341) in tmRNA + S-adenosyl-L-homocysteine + H(+). Dual-specificity methyltransferase that catalyzes the formation of 5-methyluridine at position 54 (m5U54) in all tRNAs, and that of position 341 (m5U341) in tmRNA (transfer-mRNA). This Pseudoalteromonas translucida (strain TAC 125) protein is tRNA/tmRNA (uracil-C(5))-methyltransferase.